The following is a 462-amino-acid chain: Protein Tube (462 aa).

In terms of domain architecture, Death spans 27 to 152 (YSRNTELRRV…SAADFVALDF (126 aa)). The interval 218–265 (RDKSVPQPSGNTPPIAPPRRQQRSTTNSNFATLTGTGTTSTTIPNVPN) is disordered. Over residues 249–259 (TLTGTGTTSTT) the composition is skewed to low complexity. A run of 2 repeats spans residues 262 to 269 (NVPNLTIL) and 286 to 293 (NIPDLSIL). Residues 262–460 (NVPNLTILNP…ACNIPDLSEL (199 aa)) are 5 X approximate repeats. Over residues 301–317 (RATVSDNPSNRTSSTDP) the composition is skewed to polar residues. The disordered stretch occupies residues 301–462 (RATVSDNPSN…NIPDLSELQQ (162 aa)). The stretch at 319–326 (NIPRITLL) is repeat 3. Residues 342 to 354 (AKASTATTSTASS) show a composition bias toward low complexity. Positions 355–367 (NNLPMISALNISK) are enriched in polar residues. Repeat 4 spans residues 356–363 (NLPMISAL). Residues 368–377 (GSRETLRPES) show a composition bias toward basic and acidic residues. The span at 387–403 (DDDDDNDGEEDGEEEYP) shows a compositional bias: acidic residues. Positions 409 to 424 (NLSNSEQQSSNNDSSL) are enriched in low complexity. The segment covering 425-438 (TTVTGTSGDNSFEL) has biased composition (polar residues). The span at 439 to 449 (TNDSSSTSNDD) shows a compositional bias: low complexity. Residues 453 to 460 (NIPDLSEL) form repeat 5.

Interacts (via Death domain) with pll (via Death domain). Phosphorylated by pll.

It localises to the cytoplasm. Its subcellular location is the cell membrane. Its function is as follows. Plays an essential role in the Tl receptor signaling pathway that establishes embryonic dorsoventral polarity; the signal directs import of dl into ventral and ventrolateral nuclei, thereby establishing dorsoventral polarity. Tub recruits pll to the plasma membrane and protein-protein interaction activates pll. Also has a role in pupal pattern formation. In Drosophila melanogaster (Fruit fly), this protein is Protein Tube (tub).